Consider the following 276-residue polypeptide: Protein FAM151B (276 aa).

It belongs to the menorin family.

Essential for survival of retinal photoreceptor cells. The sequence is that of Protein FAM151B (FAM151B) from Homo sapiens (Human).